We begin with the raw amino-acid sequence, 313 residues long: MNSNIFPPSKQQNELNNIQQSFSNLQSQCSNLLLNVSQTLNPLFNANTNNNKPNIFSALNSFRDQAKQALDSRISRFNSGKAPVWARISDDGGGARAQVTVPIRGSGKGLSADAIEERLAGVPVYALSNSNEEFVLVSGTSSGKSLGLLFCKEEDAETLLKEMKSMDPRMRKEGSKVVALALSKVFQLKVNGVAFRLIPESTQVKNALKERKTAGIDDDDFHGVPVFQSKSLILRSENMSYRPVFFRKEDLEKSLIRASSQQNRLNPALKPGDIQVAVFEDIVKGMRESTTSNWDDIVFIPPGFEVSTEQTQE.

The transit peptide at 1–96 directs the protein to the chloroplast; it reads MNSNIFPPSK…RISDDGGGAR (96 aa).

It belongs to the Tic22 family.

Its subcellular location is the plastid. The protein localises to the chloroplast intermembrane space. Involved in protein precursor import into chloroplasts. In Arabidopsis thaliana (Mouse-ear cress), this protein is Protein TIC 22-like, chloroplastic (TIC22L).